The primary structure comprises 117 residues: Large ribosomal subunit protein bL19 (117 aa).

This sequence belongs to the bacterial ribosomal protein bL19 family.

Its function is as follows. This protein is located at the 30S-50S ribosomal subunit interface and may play a role in the structure and function of the aminoacyl-tRNA binding site. This chain is Large ribosomal subunit protein bL19, found in Exiguobacterium sp. (strain ATCC BAA-1283 / AT1b).